The sequence spans 160 residues: Protein MGF 300-2R (160 aa).

Belongs to the asfivirus MGF 300 family.

Functionally, plays a role in virus cell tropism, and may be required for efficient virus replication in macrophages. The chain is Protein MGF 300-2R from African swine fever virus (isolate Tick/South Africa/Pretoriuskop Pr4/1996) (ASFV).